The following is a 355-amino-acid chain: UDP-N-acetylglucosamine--N-acetylmuramyl-(pentapeptide) pyrophosphoryl-undecaprenol N-acetylglucosamine transferase (355 aa).

UDP-N-acetyl-alpha-D-glucosamine is bound by residues 15–17, asparagine 127, arginine 163, serine 191, isoleucine 244, 263–268, and glutamine 288; these read TGG and ALTVSE.

This sequence belongs to the glycosyltransferase 28 family. MurG subfamily.

It is found in the cell inner membrane. The catalysed reaction is di-trans,octa-cis-undecaprenyl diphospho-N-acetyl-alpha-D-muramoyl-L-alanyl-D-glutamyl-meso-2,6-diaminopimeloyl-D-alanyl-D-alanine + UDP-N-acetyl-alpha-D-glucosamine = di-trans,octa-cis-undecaprenyl diphospho-[N-acetyl-alpha-D-glucosaminyl-(1-&gt;4)]-N-acetyl-alpha-D-muramoyl-L-alanyl-D-glutamyl-meso-2,6-diaminopimeloyl-D-alanyl-D-alanine + UDP + H(+). The protein operates within cell wall biogenesis; peptidoglycan biosynthesis. Functionally, cell wall formation. Catalyzes the transfer of a GlcNAc subunit on undecaprenyl-pyrophosphoryl-MurNAc-pentapeptide (lipid intermediate I) to form undecaprenyl-pyrophosphoryl-MurNAc-(pentapeptide)GlcNAc (lipid intermediate II). The polypeptide is UDP-N-acetylglucosamine--N-acetylmuramyl-(pentapeptide) pyrophosphoryl-undecaprenol N-acetylglucosamine transferase (Salmonella arizonae (strain ATCC BAA-731 / CDC346-86 / RSK2980)).